The sequence spans 422 residues: Beclin-1-like protein (422 aa).

The stretch at 119-243 (MLEIMDRELR…KQQLDKLRDT (125 aa)) forms a coiled coil. Residues 182–201 (QSLNDAIAEEEQEREELHEQ) are disordered.

Belongs to the beclin family. Interacts with Rab18, preferentially binding to the GTP-bound form.

Functionally, plays a central role in autophagy. The sequence is that of Beclin-1-like protein from Drosophila melanogaster (Fruit fly).